Reading from the N-terminus, the 128-residue chain is Otoraplin (128 aa).

The first 18 residues, 1–18 (MARILILLLGGLVVLCAG), serve as a signal peptide directing secretion. Cystine bridges form between cysteine 32–cysteine 37 and cysteine 55–cysteine 127. The SH3 domain occupies 39 to 110 (YTISLARAQE…PSNLVKEQRV (72 aa)).

Belongs to the MIA/OTOR family. In terms of tissue distribution, highly expressed in cochlea.

It localises to the secreted. This Mus musculus (Mouse) protein is Otoraplin (Otor).